The sequence spans 459 residues: Bifunctional protein GlmU (459 aa).

The interval 1–228 (MNFKAIILAA…IEELMGVNSR (228 aa)) is pyrophosphorylase. UDP-N-acetyl-alpha-D-glucosamine contacts are provided by residues 8–11 (LAAG), Lys22, Gln72, and 77–78 (GT). Asp101 provides a ligand contact to Mg(2+). 4 residues coordinate UDP-N-acetyl-alpha-D-glucosamine: Gly138, Glu153, Asn168, and Asn226. Asn226 contacts Mg(2+). The segment at 229 to 249 (VELSKAEEIMRRRINESHMVN) is linker. The segment at 250–459 (GVTIIDTNST…KKNQKDDQSK (210 aa)) is N-acetyltransferase. The UDP-N-acetyl-alpha-D-glucosamine site is built by Arg331 and Lys349. His361 serves as the catalytic Proton acceptor. UDP-N-acetyl-alpha-D-glucosamine is bound by residues Tyr364 and Asn375. Acetyl-CoA contacts are provided by residues 384 to 385 (NY), Ser403, Thr421, and Arg438.

It in the N-terminal section; belongs to the N-acetylglucosamine-1-phosphate uridyltransferase family. The protein in the C-terminal section; belongs to the transferase hexapeptide repeat family. Homotrimer. Mg(2+) serves as cofactor.

The protein resides in the cytoplasm. It carries out the reaction alpha-D-glucosamine 1-phosphate + acetyl-CoA = N-acetyl-alpha-D-glucosamine 1-phosphate + CoA + H(+). The enzyme catalyses N-acetyl-alpha-D-glucosamine 1-phosphate + UTP + H(+) = UDP-N-acetyl-alpha-D-glucosamine + diphosphate. It functions in the pathway nucleotide-sugar biosynthesis; UDP-N-acetyl-alpha-D-glucosamine biosynthesis; N-acetyl-alpha-D-glucosamine 1-phosphate from alpha-D-glucosamine 6-phosphate (route II): step 2/2. The protein operates within nucleotide-sugar biosynthesis; UDP-N-acetyl-alpha-D-glucosamine biosynthesis; UDP-N-acetyl-alpha-D-glucosamine from N-acetyl-alpha-D-glucosamine 1-phosphate: step 1/1. It participates in bacterial outer membrane biogenesis; LPS lipid A biosynthesis. Functionally, catalyzes the last two sequential reactions in the de novo biosynthetic pathway for UDP-N-acetylglucosamine (UDP-GlcNAc). The C-terminal domain catalyzes the transfer of acetyl group from acetyl coenzyme A to glucosamine-1-phosphate (GlcN-1-P) to produce N-acetylglucosamine-1-phosphate (GlcNAc-1-P), which is converted into UDP-GlcNAc by the transfer of uridine 5-monophosphate (from uridine 5-triphosphate), a reaction catalyzed by the N-terminal domain. This chain is Bifunctional protein GlmU, found in Clostridioides difficile (strain 630) (Peptoclostridium difficile).